Consider the following 689-residue polypeptide: Glycine--tRNA ligase beta subunit (689 aa).

The protein belongs to the class-II aminoacyl-tRNA synthetase family. Tetramer of two alpha and two beta subunits.

It localises to the cytoplasm. The enzyme catalyses tRNA(Gly) + glycine + ATP = glycyl-tRNA(Gly) + AMP + diphosphate. The protein is Glycine--tRNA ligase beta subunit of Klebsiella pneumoniae (strain 342).